The sequence spans 200 residues: MEHICGTSRIAGFRFSLYPMTDDFISVIKSALKKTDTSKVWTKTDHISTVLRGSIDHVFDAAKAIYLHAANSEQHIVMNGTFSIGCPGDTQGDTYLSKGDKRVNEDAVRGLKAEAPCQFALYPMNEPDYMGLIMEAVDIAKAQGTFVQGVHYASELDGDAHDVFSTLEAVFRMAEQQTNHITMTVNLSANSPSRKNRKQG.

Thiamine contacts are provided by Leu-17 and Thr-49.

In terms of assembly, homodimer in vitro. In vivo, may be a part of an ABC transporter complex which is composed of two ATP-binding proteins (YkoD), two transmembrane proteins (YkoC and YkoE) and a solute-binding protein (YkoF).

Functionally, part of the ABC transporter complex YkoCDEF that could transport hydroxymethylpyrimidine (HMP) and/or thiamine. Could also transport other HMP-containing products. Binds thiamine via its HMP moiety. The sequence is that of Putative HMP/thiamine-binding protein YkoF (ykoF) from Bacillus subtilis (strain 168).